The sequence spans 360 residues: Glycerol-1-phosphate dehydrogenase [NAD(P)+] (360 aa).

Residues 108–112 (GRVID) and 130–133 (TAAS) contribute to the NAD(+) site. Aspartate 135 is a substrate binding site. NAD(+) is bound at residue serine 139. Residue aspartate 182 coordinates substrate. Zn(2+)-binding residues include aspartate 182 and histidine 262. Histidine 266 lines the substrate pocket. Zn(2+) is bound at residue histidine 278.

It belongs to the glycerol-1-phosphate dehydrogenase family. Requires Zn(2+) as cofactor.

It is found in the cytoplasm. It carries out the reaction sn-glycerol 1-phosphate + NAD(+) = dihydroxyacetone phosphate + NADH + H(+). It catalyses the reaction sn-glycerol 1-phosphate + NADP(+) = dihydroxyacetone phosphate + NADPH + H(+). It functions in the pathway membrane lipid metabolism; glycerophospholipid metabolism. Functionally, catalyzes the NAD(P)H-dependent reduction of dihydroxyacetonephosphate (DHAP or glycerone phosphate) to glycerol 1-phosphate (G1P). The G1P thus generated is used as the glycerophosphate backbone of phospholipids in the cellular membranes of Archaea. This is Glycerol-1-phosphate dehydrogenase [NAD(P)+] from Methanoculleus marisnigri (strain ATCC 35101 / DSM 1498 / JR1).